A 153-amino-acid chain; its full sequence is Endoribonuclease YbeY (153 aa).

Zn(2+) is bound by residues histidine 114, histidine 118, and histidine 124.

The protein belongs to the endoribonuclease YbeY family. Zn(2+) is required as a cofactor.

It localises to the cytoplasm. Functionally, single strand-specific metallo-endoribonuclease involved in late-stage 70S ribosome quality control and in maturation of the 3' terminus of the 16S rRNA. The protein is Endoribonuclease YbeY of Shewanella amazonensis (strain ATCC BAA-1098 / SB2B).